The chain runs to 669 residues: DNA ligase (669 aa).

NAD(+) contacts are provided by residues 34-38 (DAEYD), 83-84 (SL), and Glu-114. Residue Lys-116 is the N6-AMP-lysine intermediate of the active site. Positions 137, 171, 287, and 311 each coordinate NAD(+). Cys-405, Cys-408, Cys-423, and Cys-428 together coordinate Zn(2+). The region spanning 591 to 669 (NVESYFAGKT…EERFLQELNK (79 aa)) is the BRCT domain.

Belongs to the NAD-dependent DNA ligase family. LigA subfamily. Requires Mg(2+) as cofactor. The cofactor is Mn(2+).

The catalysed reaction is NAD(+) + (deoxyribonucleotide)n-3'-hydroxyl + 5'-phospho-(deoxyribonucleotide)m = (deoxyribonucleotide)n+m + AMP + beta-nicotinamide D-nucleotide.. Its function is as follows. DNA ligase that catalyzes the formation of phosphodiester linkages between 5'-phosphoryl and 3'-hydroxyl groups in double-stranded DNA using NAD as a coenzyme and as the energy source for the reaction. It is essential for DNA replication and repair of damaged DNA. In Bacillus cereus (strain 03BB102), this protein is DNA ligase.